Reading from the N-terminus, the 199-residue chain is RNA-free ribonuclease P (199 aa).

The protein belongs to the HARP family.

It carries out the reaction Endonucleolytic cleavage of RNA, removing 5'-extranucleotides from tRNA precursor.. Its function is as follows. RNA-free RNase P that catalyzes the removal of the 5'-leader sequence from pre-tRNA to produce the mature 5'-terminus. This is RNA-free ribonuclease P from Pyrococcus furiosus (strain ATCC 43587 / DSM 3638 / JCM 8422 / Vc1).